We begin with the raw amino-acid sequence, 307 residues long: Aspartate carbamoyltransferase catalytic subunit (307 aa).

Residues Arg59 and Thr60 each coordinate carbamoyl phosphate. Residue Lys87 participates in L-aspartate binding. The carbamoyl phosphate site is built by Arg109, His137, and Gln140. Arg173 and Arg223 together coordinate L-aspartate. Gly266 and Pro267 together coordinate carbamoyl phosphate.

It belongs to the aspartate/ornithine carbamoyltransferase superfamily. ATCase family. Heterododecamer (2C3:3R2) of six catalytic PyrB chains organized as two trimers (C3), and six regulatory PyrI chains organized as three dimers (R2).

It carries out the reaction carbamoyl phosphate + L-aspartate = N-carbamoyl-L-aspartate + phosphate + H(+). The protein operates within pyrimidine metabolism; UMP biosynthesis via de novo pathway; (S)-dihydroorotate from bicarbonate: step 2/3. Its function is as follows. Catalyzes the condensation of carbamoyl phosphate and aspartate to form carbamoyl aspartate and inorganic phosphate, the committed step in the de novo pyrimidine nucleotide biosynthesis pathway. The polypeptide is Aspartate carbamoyltransferase catalytic subunit (Helicobacter pylori (strain G27)).